We begin with the raw amino-acid sequence, 334 residues long: Glucokinase-like protein XF_1460 (334 aa).

Ala18–Thr23 is a binding site for ATP.

This sequence belongs to the bacterial glucokinase family.

The polypeptide is Glucokinase-like protein XF_1460 (Xylella fastidiosa (strain 9a5c)).